Reading from the N-terminus, the 450-residue chain is MSTHVTFDYSKALSFIGEHEITYLRDAVKVTHHAIHEKTGAGNDFLGWVDLPLQYDKEEFARIQKCAEKIKNDSDILLVVGIGGSYLGARAAIEMLNHSFYNTLSKEQRKTPQVLFVGQNISSTYMKDLMDVLEGKDFSINVISKSGTTTEPALAFRIFRKLLEEKYGKEEARKRIYATTDKARGALKTLADNEGYETFVIPDDVGGRFSVLTPVGLLPIAVSGLNIEEMMKGAAAGRDDFGTSELEENPAYQYAVVRNALYNKGKTIEMLVNYEPALQYFAEWWKQLFGESEGKDQKGIFPSSANFSTDLHSLGQYVQEGRRDLFETVLKVGKSTHELTIESEENDLDGLNYLAGETVDFVNTKAYEGTLLAHSDGGVPNLIVNIPELNEYTFGYLVYFFEKACAMSGYLLGVNPFDQPGVEAYKKNMFALLGKPGFEELKAELEERLK.

Residue Thr-39 is modified to Phosphothreonine. Glu-291 acts as the Proton donor in catalysis. Catalysis depends on residues His-312 and Lys-426.

It belongs to the GPI family.

It is found in the cytoplasm. It catalyses the reaction alpha-D-glucose 6-phosphate = beta-D-fructose 6-phosphate. It functions in the pathway carbohydrate biosynthesis; gluconeogenesis. It participates in carbohydrate degradation; glycolysis; D-glyceraldehyde 3-phosphate and glycerone phosphate from D-glucose: step 2/4. Functionally, catalyzes the reversible isomerization of glucose-6-phosphate to fructose-6-phosphate. This chain is Glucose-6-phosphate isomerase, found in Bacillus thuringiensis (strain Al Hakam).